The chain runs to 95 residues: Large ribosomal subunit protein eL31 (95 aa).

The protein belongs to the eukaryotic ribosomal protein eL31 family.

This is Large ribosomal subunit protein eL31 (rpl31e) from Pyrococcus horikoshii (strain ATCC 700860 / DSM 12428 / JCM 9974 / NBRC 100139 / OT-3).